Consider the following 242-residue polypeptide: Large ribosomal subunit protein uL1 (242 aa).

It belongs to the universal ribosomal protein uL1 family. In terms of assembly, part of the 50S ribosomal subunit.

In terms of biological role, binds directly to 23S rRNA. The L1 stalk is quite mobile in the ribosome, and is involved in E site tRNA release. Protein L1 is also a translational repressor protein, it controls the translation of the L11 operon by binding to its mRNA. The chain is Large ribosomal subunit protein uL1 from Dictyoglomus thermophilum (strain ATCC 35947 / DSM 3960 / H-6-12).